The chain runs to 338 residues: Ketol-acid reductoisomerase (NADP(+)) (338 aa).

The region spanning 1–181 (MKVFYDKDAD…GGGRAGIIET (181 aa)) is the KARI N-terminal Rossmann domain. NADP(+)-binding positions include 24-27 (YGSQ), Arg47, and Ser52. Residue His107 is part of the active site. NADP(+) is bound at residue Gly133. Residues 182-327 (NFREETETDL…AKLRAMMPWI (146 aa)) enclose the KARI C-terminal knotted domain. Residues Asp190, Glu194, Glu226, and Glu230 each coordinate Mg(2+). Residue Ser251 participates in substrate binding.

The protein belongs to the ketol-acid reductoisomerase family. Mg(2+) serves as cofactor.

It catalyses the reaction (2R)-2,3-dihydroxy-3-methylbutanoate + NADP(+) = (2S)-2-acetolactate + NADPH + H(+). The enzyme catalyses (2R,3R)-2,3-dihydroxy-3-methylpentanoate + NADP(+) = (S)-2-ethyl-2-hydroxy-3-oxobutanoate + NADPH + H(+). It functions in the pathway amino-acid biosynthesis; L-isoleucine biosynthesis; L-isoleucine from 2-oxobutanoate: step 2/4. It participates in amino-acid biosynthesis; L-valine biosynthesis; L-valine from pyruvate: step 2/4. Functionally, involved in the biosynthesis of branched-chain amino acids (BCAA). Catalyzes an alkyl-migration followed by a ketol-acid reduction of (S)-2-acetolactate (S2AL) to yield (R)-2,3-dihydroxy-isovalerate. In the isomerase reaction, S2AL is rearranged via a Mg-dependent methyl migration to produce 3-hydroxy-3-methyl-2-ketobutyrate (HMKB). In the reductase reaction, this 2-ketoacid undergoes a metal-dependent reduction by NADPH to yield (R)-2,3-dihydroxy-isovalerate. In Polynucleobacter asymbioticus (strain DSM 18221 / CIP 109841 / QLW-P1DMWA-1) (Polynucleobacter necessarius subsp. asymbioticus), this protein is Ketol-acid reductoisomerase (NADP(+)).